The sequence spans 132 residues: Small ribosomal subunit protein uS8 (132 aa).

Belongs to the universal ribosomal protein uS8 family. Part of the 30S ribosomal subunit. Contacts proteins S5 and S12.

Functionally, one of the primary rRNA binding proteins, it binds directly to 16S rRNA central domain where it helps coordinate assembly of the platform of the 30S subunit. The protein is Small ribosomal subunit protein uS8 of Streptococcus equi subsp. equi (strain 4047).